A 268-amino-acid chain; its full sequence is Small ribosomal subunit protein uS2 (268 aa).

Residues 161 to 179 (IPCNNDKYSIALMLWMLAR) form a laminin-binding region.

The protein belongs to the universal ribosomal protein uS2 family. Component of the small ribosomal subunit. Mature ribosomes consist of a small (40S) and a large (60S) subunit. The 40S subunit contains about 33 different proteins and 1 molecule of RNA (18S). The 60S subunit contains about 49 different proteins and 3 molecules of RNA (28S, 5.8S and 5S). Interacts with ribosomal protein S21.

It is found in the cytoplasm. In terms of biological role, required for the assembly and/or stability of the 40S ribosomal subunit. Required for the processing of the 20S rRNA-precursor to mature 18S rRNA in a late step of the maturation of 40S ribosomal subunits. Binds laminin. In Echinococcus granulosus (Hydatid tapeworm), this protein is Small ribosomal subunit protein uS2 (egmo3).